The primary structure comprises 473 residues: Myocyte-specific enhancer factor 2C (473 aa).

One can recognise an MADS-box domain in the interval 3–57 (RKKIQITRIMDERNRQVTFTKRKFGLMKKAYELSVLCDCEIALIIFNSTNKLFQY). The residue at position 4 (lysine 4) is an N6-acetyllysine. The segment at residues 58–86 (ASTDMDKVLLKYTEYNEPHESRTNSDIVE) is a DNA-binding region (mef2-type). Serine 59 carries the post-translational modification Phosphoserine; by CK2. The disordered stretch occupies residues 91-116 (KGLNGCDSPDPDADDSVGHSPESEDK). Phosphoserine occurs at positions 98, 106, and 110. 2 positions are modified to N6-acetyllysine: lysine 116 and lysine 119. The segment at 180-224 (NSMSPGVTHRPPSAGNTGGLMGGDLTSGAGTSAGNGYGNPRNSPG) is disordered. A phosphoserine mark is found at serine 222 and serine 228. N6-acetyllysine is present on residues lysine 234 and lysine 239. Serine 240 bears the Phosphoserine mark. An N6-acetyllysine mark is found at lysine 252 and lysine 264. Residues 271–278 (SEDVDLLL) form a beta domain region. A phosphothreonine; by MAPK14 mark is found at threonine 293 and threonine 300. Residues 368-399 (ACTSTHLSQSSNLSLPSTQSLNIKSEPVSPPR) are transcription repressor. Positions 375–390 (SQSSNLSLPSTQSLNI) are enriched in polar residues. Residues 375 to 473 (SQSSNLSLPS…RMRLSEGWAT (99 aa)) are disordered. Lysine 391 participates in a covalent cross-link: Glycyl lysine isopeptide (Lys-Gly) (interchain with G-Cter in SUMO). The residue at position 396 (serine 396) is a Phosphoserine; by CDK5. The residue at position 419 (serine 419) is a Phosphoserine; by MAPK7. Residues 419–432 (SPVDSLSSCSSSYD) are compositionally biased toward low complexity. The segment covering 433–443 (GSDREDHRNEF) has biased composition (basic and acidic residues). Serine 445 is subject to Phosphoserine.

Belongs to the MEF2 family. As to quaternary structure, forms a complex with class II HDACs in undifferentiating cells. On myogenic differentiation, HDACs are released into the cytoplasm allowing MEF2s to interact with other proteins for activation. Interacts with EP300 in differentiating cells; the interaction acetylates MEF2C leading to increased DNA binding and activation. Interacts with HDAC7 and CARM1. Interacts with HDAC4 and HDAC9; the interaction with HDACs represses transcriptional activity. Interacts with LPIN1. Interacts with MYOCD. Interacts with AKAP13. Interacts with FOXK1; the interaction inhibits MEF2C transactivation activity. Interacts (via N-terminus) with HABP4; this interaction decreases DNA-binding activity of MEF2C in myocardial cells in response to mechanical stress. Interacts with JPH2; interaction specifically takes place with the Junctophilin-2 N-terminal fragment cleavage product of JPH2. Interacts (via MADS box) with SOX18. Interacts with PHF7; the interaction promotes MEF2C binding to its transcription targets. Post-translationally, phosphorylation on Ser-59 enhances DNA binding activity. Phosphorylation on Ser-396 is required for Lys-391 sumoylation and inhibits transcriptional activity. In terms of processing, acetylated by p300 on several sites in diffentiating myocytes. Acetylation on Lys-4 increases DNA binding and transactivation. Sumoylated on Lys-391 with SUMO2 but not by SUMO1 represses transcriptional activity. Post-translationally, proteolytically cleaved in cerebellar granule neurons, probably by caspase 7, following neurotoxicity. Preferentially cleaves the CDK5-mediated hyperphosphorylated form which leads to neuron apoptosis and transcriptional inactivation. Expressed in brain and skeletal muscle.

Its subcellular location is the nucleus. The protein resides in the cytoplasm. The protein localises to the sarcoplasm. Transcription activator which binds specifically to the MEF2 element present in the regulatory regions of many muscle-specific genes. Controls cardiac morphogenesis and myogenesis, and is also involved in vascular development. Enhances transcriptional activation mediated by SOX18. Plays an essential role in hippocampal-dependent learning and memory by suppressing the number of excitatory synapses and thus regulating basal and evoked synaptic transmission. Crucial for normal neuronal development, distribution, and electrical activity in the neocortex. Necessary for proper development of megakaryocytes and platelets and for bone marrow B-lymphopoiesis. Required for B-cell survival and proliferation in response to BCR stimulation, efficient IgG1 antibody responses to T-cell-dependent antigens and for normal induction of germinal center B-cells. May also be involved in neurogenesis and in the development of cortical architecture. Isoforms that lack the repressor domain are more active than isoform 1. This chain is Myocyte-specific enhancer factor 2C, found in Homo sapiens (Human).